Consider the following 199-residue polypeptide: Carbon disulfide hydrolase (199 aa).

Cysteine 36, histidine 91, and cysteine 94 together coordinate Zn(2+).

It belongs to the beta-class carbonic anhydrase family. Exists as both octamers and hexadecamers in solution. The hexadecameric homooligomer may form a catenane, through interactions of two interlocked octameric rings. It depends on Zn(2+) as a cofactor.

The enzyme catalyses carbon disulfide + 2 H2O = 2 hydrogen sulfide + CO2 + 2 H(+). It functions in the pathway sulfur metabolism; hydrogen sulfide biosynthesis. In terms of biological role, catalyzes the conversion of carbon disulfide into hydrogen sulfide and carbon dioxide, with carbonyl sulfide as an intermediate. Likely plays a key role in sulfur metabolism that allows A.thiooxidans G8 to grow on carbon disulfide as the main carbon and energy source. Does not show carbonic anhydrase activity (hydration of CO(2) to carbonate). This chain is Carbon disulfide hydrolase, found in Acidithiobacillus thiooxidans (Thiobacillus thiooxidans).